Reading from the N-terminus, the 206-residue chain is Large ribosomal subunit protein uL22m (206 aa).

Residues 1–40 (MAAAVLGQLGALWIHNLRSRGKLALGVLPQSYIHTSASLD) constitute a mitochondrion transit peptide.

It belongs to the universal ribosomal protein uL22 family. As to quaternary structure, component of the mitochondrial large ribosomal subunit (mt-LSU). Mature mammalian 55S mitochondrial ribosomes consist of a small (28S) and a large (39S) subunit. The 28S small subunit contains a 12S ribosomal RNA (12S mt-rRNA) and 30 different proteins. The 39S large subunit contains a 16S rRNA (16S mt-rRNA), a copy of mitochondrial valine transfer RNA (mt-tRNA(Val)), which plays an integral structural role, and 52 different proteins.

It is found in the mitochondrion. The chain is Large ribosomal subunit protein uL22m (MRPL22) from Homo sapiens (Human).